A 93-amino-acid polypeptide reads, in one-letter code: Putative septation protein SpoVG (93 aa).

This sequence belongs to the SpoVG family.

Functionally, could be involved in septation. This is Putative septation protein SpoVG from Treponema denticola (strain ATCC 35405 / DSM 14222 / CIP 103919 / JCM 8153 / KCTC 15104).